A 198-amino-acid polypeptide reads, in one-letter code: Nucleoside triphosphate pyrophosphatase (198 aa).

The active-site Proton acceptor is Asp-72.

It belongs to the Maf family. The cofactor is a divalent metal cation.

The protein localises to the cytoplasm. The enzyme catalyses a ribonucleoside 5'-triphosphate + H2O = a ribonucleoside 5'-phosphate + diphosphate + H(+). It carries out the reaction a 2'-deoxyribonucleoside 5'-triphosphate + H2O = a 2'-deoxyribonucleoside 5'-phosphate + diphosphate + H(+). Nucleoside triphosphate pyrophosphatase. May have a dual role in cell division arrest and in preventing the incorporation of modified nucleotides into cellular nucleic acids. This is Nucleoside triphosphate pyrophosphatase from Acinetobacter baylyi (strain ATCC 33305 / BD413 / ADP1).